The primary structure comprises 49 residues: Delta-actitoxin-Axm1a (49 aa).

3 disulfides stabilise this stretch: C4–C46, C6–C36, and C29–C47.

Belongs to the sea anemone sodium channel inhibitory toxin family. Type I subfamily.

It localises to the secreted. Its subcellular location is the nematocyst. Its function is as follows. Binds specifically to voltage-gated sodium channels (Nav) (site 3), thereby delaying their inactivation. This toxin retains the greatest capacity to discriminate between the cardiac (Nav1.5/SCN5A) and neuronal sodium channels (2.5 nM versus 120 nM, when electrophysiologically tested and 14 nM versus 400 nM, when tested by ion flux), whereas its paralog Anthopleurin-B has the highest affinity of all anemone toxins for the mammalian sodium channel. Its ability to differentiate between cardiac and skeletal channels appears to be associated with domain 4 of the channel. This toxin does not slow or inhibit closed-state inactivation of cardiac sodium channels, but selectively modifies inactivation from the open-state. It does not display phospholipid-binding activities, suggesting that the domain IV S3-S4 linker is located at the extracellular surface and not buried in the phospholipid bilayer. The protein is Delta-actitoxin-Axm1a of Anthopleura xanthogrammica (Giant green sea anemone).